The primary structure comprises 600 residues: MTNKLDCLKLINFIEKSNLFTTNKIRDKKLLIAFSGGQDSSCLLTIFYILSKKWGFKLGAVYCNHCWTDSPQSSLSAFDTLQMFDIPFYFVESPNSEPMKPEQKARDWRYSSFYTISKWEDYDFVLTGHSLSDCVETVLFNLFRGSGLKGICSLKEDQKFSNLKTNDFFFQKTVCFLDPFFYFSDKKGNPFFRKYRLFQSMSFLSIFPKFDFFAFGENCAIDKSNFPLKNKSKGKNLQFLTSFDIKNWFGIKKICRFCFLDKIGQTGIKKKRGTNRVPILIFSRRVNKTTSPLALNFQTKNKRVDRKSFLFRFSLAFALPLAFALRAKGEKVRKNALLNQIKPVSFFFKTKKDKTETNLFHRYLQTIKKLQNRDKISSFITIFRPFILTLGNVKIKGKKIKNKNLPFQIKKLIRKKEKEKGILWNSLSKLDNKDKLISNQIQKKGFKLIPKFILTKDKKSFSNFPPFIFDQLEKTFRKEKVDTKPRNSSPQFEVLFNKLSQPSSDKKNVDFIVFRPLIKITRETLFLFSNNLKIPIYYDKSNKDLNITRNYIRKVLVPLLKKINPRVEENIYKFSKIIEFYYQVFGDLKCPSDRFDIFNP.

35 to 40 (SGGQDS) is an ATP binding site.

Belongs to the tRNA(Ile)-lysidine synthase family.

The protein resides in the plastid. Its subcellular location is the chloroplast. The catalysed reaction is cytidine(34) in tRNA(Ile2) + L-lysine + ATP = lysidine(34) in tRNA(Ile2) + AMP + diphosphate + H(+). Ligates lysine onto the cytidine present at position 34 of the AUA codon-specific tRNA(Ile) that contains the anticodon CAU, in an ATP-dependent manner. Cytidine is converted to lysidine, thus changing the amino acid specificity of the tRNA from methionine to isoleucine. The sequence is that of tRNA(Ile)-lysidine synthase, chloroplastic from Tupiella akineta (Green alga).